A 204-amino-acid polypeptide reads, in one-letter code: General stress protein Ctc (204 aa).

Positions 177–204 (ILPPQQQEAAEVDEEESADAQPEGENEQ) are disordered. Over residues 186–204 (AEVDEEESADAQPEGENEQ) the composition is skewed to acidic residues.

The protein belongs to the bacterial ribosomal protein bL25 family. CTC subfamily. Part of the ribosome (presumably the 50S subunit) under heat-stress but not control growth conditions. Binds 5S rRNA.

In terms of biological role, not required for exponential growth; probably functions in vegetatively growing cells, maybe required for accurate translation under stress conditions. The polypeptide is General stress protein Ctc (Bacillus subtilis (strain 168)).